The primary structure comprises 177 residues: uncharacterized protein (177 aa).

This is an uncharacterized protein from Schizosaccharomyces pombe (strain 972 / ATCC 24843) (Fission yeast).